We begin with the raw amino-acid sequence, 448 residues long: Trigger factor (448 aa).

In terms of domain architecture, PPIase FKBP-type spans 172–257; it reads GDRVTVDFVG…MKKIEWPHLP (86 aa).

This sequence belongs to the FKBP-type PPIase family. Tig subfamily.

The protein localises to the cytoplasm. It catalyses the reaction [protein]-peptidylproline (omega=180) = [protein]-peptidylproline (omega=0). Its function is as follows. Involved in protein export. Acts as a chaperone by maintaining the newly synthesized protein in an open conformation. Functions as a peptidyl-prolyl cis-trans isomerase. The chain is Trigger factor from Burkholderia orbicola (strain MC0-3).